Reading from the N-terminus, the 112-residue chain is UPF0102 protein JJD26997_0163 (112 aa).

Belongs to the UPF0102 family.

The polypeptide is UPF0102 protein JJD26997_0163 (Campylobacter jejuni subsp. doylei (strain ATCC BAA-1458 / RM4099 / 269.97)).